A 172-amino-acid chain; its full sequence is Putative Dresden prostate carcinoma protein 2 (172 aa).

Positions Gln40–Ala61 are disordered.

Very high expression in prostate and prostate cancer. Faint expression in other tissues.

The sequence is that of Putative Dresden prostate carcinoma protein 2 (HMGN2P46) from Homo sapiens (Human).